The following is a 331-amino-acid chain: Glycerol-3-phosphate dehydrogenase [NAD(P)+] (331 aa).

NADPH-binding residues include Ser-11, Phe-12, Arg-32, and Lys-106. Positions 106, 134, and 136 each coordinate sn-glycerol 3-phosphate. Ala-138 serves as a coordination point for NADPH. Positions 189, 242, 252, 253, and 254 each coordinate sn-glycerol 3-phosphate. The active-site Proton acceptor is Lys-189. Arg-253 contributes to the NADPH binding site. Positions 277 and 279 each coordinate NADPH.

Belongs to the NAD-dependent glycerol-3-phosphate dehydrogenase family.

The protein resides in the cytoplasm. It carries out the reaction sn-glycerol 3-phosphate + NAD(+) = dihydroxyacetone phosphate + NADH + H(+). It catalyses the reaction sn-glycerol 3-phosphate + NADP(+) = dihydroxyacetone phosphate + NADPH + H(+). The protein operates within membrane lipid metabolism; glycerophospholipid metabolism. In terms of biological role, catalyzes the reduction of the glycolytic intermediate dihydroxyacetone phosphate (DHAP) to sn-glycerol 3-phosphate (G3P), the key precursor for phospholipid synthesis. This chain is Glycerol-3-phosphate dehydrogenase [NAD(P)+], found in Clostridium perfringens (strain ATCC 13124 / DSM 756 / JCM 1290 / NCIMB 6125 / NCTC 8237 / Type A).